The following is a 90-amino-acid chain: Probable Fe(2+)-trafficking protein (90 aa).

The protein belongs to the Fe(2+)-trafficking protein family.

Functionally, could be a mediator in iron transactions between iron acquisition and iron-requiring processes, such as synthesis and/or repair of Fe-S clusters in biosynthetic enzymes. The protein is Probable Fe(2+)-trafficking protein of Verminephrobacter eiseniae (strain EF01-2).